A 379-amino-acid chain; its full sequence is Glutamate 5-kinase (379 aa).

Residue Lys17 coordinates ATP. Substrate-binding residues include Ser57, Asp144, and Asn156. 176-177 (SD) provides a ligand contact to ATP. One can recognise a PUA domain in the interval 282–359 (SGILMIDQGA…EEIESILGYE (78 aa)).

Belongs to the glutamate 5-kinase family.

It localises to the cytoplasm. It catalyses the reaction L-glutamate + ATP = L-glutamyl 5-phosphate + ADP. It functions in the pathway amino-acid biosynthesis; L-proline biosynthesis; L-glutamate 5-semialdehyde from L-glutamate: step 1/2. Its function is as follows. Catalyzes the transfer of a phosphate group to glutamate to form L-glutamate 5-phosphate. The polypeptide is Glutamate 5-kinase (Bartonella henselae (strain ATCC 49882 / DSM 28221 / CCUG 30454 / Houston 1) (Rochalimaea henselae)).